The primary structure comprises 344 residues: Heat-inducible transcription repressor HrcA (344 aa).

It belongs to the HrcA family.

In terms of biological role, negative regulator of class I heat shock genes (grpE-dnaK-dnaJ and groELS operons). Prevents heat-shock induction of these operons. This chain is Heat-inducible transcription repressor HrcA, found in Aster yellows witches'-broom phytoplasma (strain AYWB).